Reading from the N-terminus, the 36-residue chain is Glucagon-2 (36 aa).

Belongs to the glucagon family.

The protein localises to the secreted. Functionally, glucagon plays a key role in glucose metabolism and homeostasis. Regulates blood glucose by increasing gluconeogenesis and decreasing glycolysis. This Huso dauricus (Kaluga sturgeon) protein is Glucagon-2.